The primary structure comprises 312 residues: Zinc-finger homeodomain protein 9 (312 aa).

The disordered stretch occupies residues 1–27 (MLEVRSMDMTPKSPEPESETPTRIQPA). Position 13 is a phosphoserine (Ser-13). Residues 52–103 (YKECLKNHAAAIGGHALDGCGEFMPSPSSTPSDPTSLKCAACGCHRNFHRRE) form a ZF-HD dimerization-type; degenerate zinc finger. Disordered regions lie at residues 128–155 (QPHHRHHPPPPLAPPLPRSPNSSSPPPI) and 253–312 (FSGG…SSSS). The segment covering 136-155 (PPPLAPPLPRSPNSSSPPPI) has biased composition (pro residues). The homeobox DNA-binding region spans 192–255 (RKRFRTKFSS…NNKNSFKFSG (64 aa)). Phosphoserine is present on Ser-273.

As to quaternary structure, homo- and heterodimer with other ZFHD proteins. Interacts with MIF3; this interaction prevents nuclear localization and DNA-binding to inhibit transcription regulation activity. Binds to ZHD1, ZHD2 and ZHD11. As to expression, mostly expressed in flowers, stems and inflorescence and, to a lower extent, in leaves and stems.

Its subcellular location is the nucleus. Its function is as follows. Putative transcription factor. This chain is Zinc-finger homeodomain protein 9 (ZHD9), found in Arabidopsis thaliana (Mouse-ear cress).